The sequence spans 409 residues: LL-diaminopimelate aminotransferase (409 aa).

Substrate is bound by residues tyrosine 15 and glycine 42. Residues tyrosine 72, 108–109 (AK), tyrosine 132, asparagine 186, tyrosine 217, and 245–247 (SFS) each bind pyridoxal 5'-phosphate. Residues lysine 109, tyrosine 132, and asparagine 186 each contribute to the substrate site. Lysine 248 is modified (N6-(pyridoxal phosphate)lysine). Pyridoxal 5'-phosphate-binding residues include arginine 256 and asparagine 291. Asparagine 291 and arginine 387 together coordinate substrate.

This sequence belongs to the class-I pyridoxal-phosphate-dependent aminotransferase family. LL-diaminopimelate aminotransferase subfamily. Homodimer. Pyridoxal 5'-phosphate serves as cofactor.

The enzyme catalyses (2S,6S)-2,6-diaminopimelate + 2-oxoglutarate = (S)-2,3,4,5-tetrahydrodipicolinate + L-glutamate + H2O + H(+). Its pathway is amino-acid biosynthesis; L-lysine biosynthesis via DAP pathway; LL-2,6-diaminopimelate from (S)-tetrahydrodipicolinate (aminotransferase route): step 1/1. In terms of biological role, involved in the synthesis of meso-diaminopimelate (m-DAP or DL-DAP), required for both lysine and peptidoglycan biosynthesis. Catalyzes the direct conversion of tetrahydrodipicolinate to LL-diaminopimelate. This is LL-diaminopimelate aminotransferase from Parabacteroides distasonis (strain ATCC 8503 / DSM 20701 / CIP 104284 / JCM 5825 / NCTC 11152).